A 479-amino-acid chain; its full sequence is 5-hydroxytryptamine receptor 7 (479 aa).

At 1-83 the chain is on the extracellular side; it reads MMDVNSSGRP…INYGRVEKVV (83 aa). 2 N-linked (GlcNAc...) asparagine glycosylation sites follow: Asn-5 and Asn-66. Residues 84 to 108 form a helical membrane-spanning segment; it reads IGSILTLITLLTIAGNCLVVISVCF. At 109-118 the chain is on the cytoplasmic side; that stretch reads VKKLRQPSNY. A helical transmembrane segment spans residues 119–140; the sequence is LIVSLALADLSVAVAVMPFVSV. Topologically, residues 141-152 are extracellular; that stretch reads TDLIGGKWIFGH. Residues 153–178 form a helical membrane-spanning segment; it reads FFCNVFIAMDVMCCTASIMTLCVISI. Residues Cys-155 and Cys-231 are joined by a disulfide bond. A serotonin-binding site is contributed by Asp-162. Over 179-198 the chain is Cytoplasmic; that stretch reads DRYLGITRPLTYPVRQNGKC. Residues 199–219 traverse the membrane as a helical segment; that stretch reads MAKMILSVWLLSASITLPPLF. The Extracellular portion of the chain corresponds to 220–237; sequence GWAQNVNDDKVCLISQDF. Residues 238–260 form a helical membrane-spanning segment; that stretch reads GYTIYSTAVAFYIPMSVMLFMYY. The Cytoplasmic segment spans residues 261–326; it reads QIYKAARKSA…SIFKREQKAA (66 aa). Residues 327-352 traverse the membrane as a helical segment; the sequence is TTLGIIVGAFTVCWLPFFLLSTARPF. Topologically, residues 353–363 are extracellular; the sequence is ICGTSCSCIPL. A helical transmembrane segment spans residues 364-387; the sequence is WVERTFLWLGYANSLINPFIYAFF. At 388-479 the chain is on the cytoplasmic side; it reads NRDLRTTYRS…TVEKKVMIHD (92 aa). A lipid anchor (S-palmitoyl cysteine) is attached at Cys-401.

The protein belongs to the G-protein coupled receptor 1 family. In terms of tissue distribution, predominant isoform in spleen, caudate and hippocampus. As to expression, expressed at lower levels. Minor isoform in terms of expression.

It is found in the cell membrane. Its function is as follows. G-protein coupled receptor for 5-hydroxytryptamine (serotonin), a biogenic hormone that functions as a neurotransmitter, a hormone and a mitogen. Ligand binding causes a conformation change that triggers signaling via guanine nucleotide-binding proteins (G proteins) and modulates the activity of downstream effectors. HTR7 is coupled to G(s) G alpha proteins and mediates activation of adenylate cyclase activity. The protein is 5-hydroxytryptamine receptor 7 of Homo sapiens (Human).